A 79-amino-acid chain; its full sequence is Sec-independent protein translocase protein TatA (79 aa).

A helical transmembrane segment spans residues 1-21 (MGFSTTHLLIFLVIIIVIFGT). The interval 43-63 (KEGSDKAADAPAAAPQQVASS) is disordered. Over residues 51-63 (DAPAAAPQQVASS) the composition is skewed to low complexity.

It belongs to the TatA/E family. The Tat system comprises two distinct complexes: a TatABC complex, containing multiple copies of TatA, TatB and TatC subunits, and a separate TatA complex, containing only TatA subunits. Substrates initially bind to the TatABC complex, which probably triggers association of the separate TatA complex to form the active translocon.

The protein localises to the cell inner membrane. Its function is as follows. Part of the twin-arginine translocation (Tat) system that transports large folded proteins containing a characteristic twin-arginine motif in their signal peptide across membranes. TatA could form the protein-conducting channel of the Tat system. This chain is Sec-independent protein translocase protein TatA, found in Albidiferax ferrireducens (strain ATCC BAA-621 / DSM 15236 / T118) (Rhodoferax ferrireducens).